The sequence spans 182 residues: MEALVCAFSELHIREDAVSQAQGRPGHPDAPPNIYEGGLGSPQPQCPSAQGSKPKNFRLRHLRGLGLYLESHPPPTGQCESHWLGRLMAGGCLPQPEGTAWALDLPQGTLGPRNSLCSALLEARLPRDSLGSSASSSSMDPDKGALPQPSPSRLRPKRSWGTWEEAMCPLCKRTRSGALERP.

Disordered regions lie at residues 17-53 (AVSQAQGRPGHPDAPPNIYEGGLGSPQPQCPSAQGSK) and 128-159 (DSLGSSASSSSMDPDKGALPQPSPSRLRPKRS). The span at 42-53 (PQPQCPSAQGSK) shows a compositional bias: polar residues. The segment covering 129 to 138 (SLGSSASSSS) has biased composition (low complexity).

This is an uncharacterized protein from Homo sapiens (Human).